We begin with the raw amino-acid sequence, 124 residues long: Small ribosomal subunit protein uS11 (124 aa).

The protein belongs to the universal ribosomal protein uS11 family. In terms of assembly, part of the 30S ribosomal subunit. Interacts with proteins S7 and S18. Binds to IF-3.

In terms of biological role, located on the platform of the 30S subunit, it bridges several disparate RNA helices of the 16S rRNA. Forms part of the Shine-Dalgarno cleft in the 70S ribosome. The protein is Small ribosomal subunit protein uS11 of Anaplasma phagocytophilum (strain HZ).